The following is a 339-amino-acid chain: Fructose-1,6-bisphosphatase isozyme 2 (339 aa).

The important for interaction with ALDOA stretch occupies residues 3-10; the sequence is DRSPFETD. Residues Val18 and 28–32 each bind AMP; that span reads TGELT. Residues Asp69 and Glu98 each coordinate Mg(2+). Position 113–114 (113–114) interacts with AMP; the sequence is KY. Residues Asp119, Leu121, and Asp122 each contribute to the Mg(2+) site. Residue Asp122 coordinates substrate. Residue Arg141 participates in AMP binding. Positions 204–208 match the Nuclear localization signal motif; sequence KKKGK. 213 to 216 contacts substrate; that stretch reads NEGY. Tyr216 and Tyr219 each carry phosphotyrosine. Substrate-binding positions include 245–249, Tyr265, and Lys275; that span reads YVGSM. Glu281 serves as a coordination point for Mg(2+).

Belongs to the FBPase class 1 family. Homotetramer. Interacts with ALDOA; the interaction blocks inhibition by physiological concentrations of AMP and reduces inhibition by Ca(2+). Interacts with alpha-actinin and F-actin. The cofactor is Mg(2+).

It localises to the cell junction. Its subcellular location is the cytoplasm. The protein resides in the nucleus. It is found in the myofibril. The protein localises to the sarcomere. It localises to the z line. It carries out the reaction beta-D-fructose 1,6-bisphosphate + H2O = beta-D-fructose 6-phosphate + phosphate. It functions in the pathway carbohydrate biosynthesis; gluconeogenesis. With respect to regulation, subject to complex allosteric regulation. The enzyme can assume an active R-state, or an inactive T-state. Intermediate conformations may exist. AMP acts as an allosteric inhibitor. Fructose 2,6-bisphosphate acts as a competitive inhibitor. Strongly inhibited by Ca(2+). In terms of biological role, catalyzes the hydrolysis of fructose 1,6-bisphosphate to fructose 6-phosphate in the presence of divalent cations and probably participates in glycogen synthesis from carbohydrate precursors, such as lactate. This Rattus norvegicus (Rat) protein is Fructose-1,6-bisphosphatase isozyme 2 (Fbp2).